The following is a 160-amino-acid chain: Cytochrome c-type biogenesis protein CcmE (160 aa).

At 1 to 8 (MNPRRKNR) the chain is on the cytoplasmic side. Residues 9–29 (LILVMLVLVGLGLATALVMYA) form a helical; Signal-anchor for type II membrane protein membrane-spanning segment. Over 30–160 (LRSNIDLFYT…AVGDNSVRPS (131 aa)) the chain is Periplasmic. Heme-binding residues include H130 and Y134. Residues 133-148 (KYTPPEIEDAMKKDHP) show a composition bias toward basic and acidic residues. Residues 133–160 (KYTPPEIEDAMKKDHPAQAVGDNSVRPS) are disordered.

Belongs to the CcmE/CycJ family.

The protein localises to the cell inner membrane. Heme chaperone required for the biogenesis of c-type cytochromes. Transiently binds heme delivered by CcmC and transfers the heme to apo-cytochromes in a process facilitated by CcmF and CcmH. This chain is Cytochrome c-type biogenesis protein CcmE, found in Erwinia tasmaniensis (strain DSM 17950 / CFBP 7177 / CIP 109463 / NCPPB 4357 / Et1/99).